An 86-amino-acid polypeptide reads, in one-letter code: Large ribosomal subunit protein bL27 (86 aa).

Positions 1-23 (MAHKKAGGSTRNGRDSESKRLGV) are disordered.

Belongs to the bacterial ribosomal protein bL27 family.

The protein is Large ribosomal subunit protein bL27 of Alkalilimnicola ehrlichii (strain ATCC BAA-1101 / DSM 17681 / MLHE-1).